The chain runs to 1684 residues: Latrophilin Cirl (1684 aa).

Residues 1-765 are Extracellular-facing; the sequence is MASNNYIQIM…LFTMFDGNMR (765 aa). The SUEL-type lectin domain maps to 21-110; that stretch reads ACEGKKLTIE…KYLEAHYQCV (90 aa). Asn138, Asn251, Asn297, and Asn336 each carry an N-linked (GlcNAc...) asparagine glycan. The tract at residues 181–300 is disordered; the sequence is PPATHATPPG…GPSVSSNGSA (120 aa). Polar residues-rich tracts occupy residues 250 to 260 and 278 to 300; these read SNATAPSNTRI and KSSP…NGSA. The disordered stretch occupies residues 370-391; sequence SFDEDDEEMAGTSTTTPMSTSS. Over residues 381 to 391 the composition is skewed to low complexity; sequence TSTTTPMSTSS. Asn396, Asn653, Asn701, and Asn728 each carry an N-linked (GlcNAc...) asparagine glycan. The GAIN-B domain occupies 559–752; the sequence is RSVVQKVKNI…AILMDVVDEH (194 aa). 2 cysteine pairs are disulfide-bonded: Cys707/Cys734 and Cys722/Cys736. The interval 707-752 is GPS; sequence CVFWNYIDHAWSANGCSLESTNRTHSVCSCNHLTNFAILMDVVDEH. Residues 766-786 traverse the membrane as a helical segment; sequence IFIYISIAICVVFIVIALLTL. Residues 787–799 lie on the Cytoplasmic side of the membrane; sequence KLFNGVFVKSART. The chain crosses the membrane as a helical span at residues 800–820; that stretch reads SIYINIYICLLAIELLFLLGI. The Extracellular segment spans residues 821–826; it reads EQTETS. The chain crosses the membrane as a helical span at residues 827–847; that stretch reads IFCGFITVFLHCAILSGTSWF. Topologically, residues 848 to 873 are cytoplasmic; it reads CYEAFHSYSTLTSDELLLEVDQTPKV. A helical membrane pass occupies residues 874–894; it reads NCYYLLSYGLSLSVVAISLVI. Residues 895–918 lie on the Extracellular side of the membrane; sequence NPSTYTQNDYCVLMEANAVFYATF. The helical transmembrane segment at 919–939 threads the bilayer; it reads VAPVLIFFMAAIGYTFLSWII. Over 940–966 the chain is Cytoplasmic; sequence MCRKSRTGLKTKEHTRLATVRFDIRCS. A helical membrane pass occupies residues 967–987; that stretch reads FVFFLLLSAVWCSAYFYLRGA. At 988–994 the chain is on the extracellular side; that stretch reads KMDEDVT. The helical transmembrane segment at 995 to 1015 threads the bilayer; it reads GIYGYNFICFNTLLGLYIFVF. Topologically, residues 1016–1684 are cytoplasmic; that stretch reads HCIQNEKIRR…VRCYLEPLAK (669 aa). A disordered region spans residues 1080–1100; that stretch reads PLGTNDDAHDEQQQQQHMSAT. Phosphoserine is present on residues Ser1156, Ser1247, and Ser1254. Disordered stretches follow at residues 1228-1255, 1270-1353, 1441-1520, and 1587-1669; these read KPNS…LHSR, KTKP…APPP, SRYG…LPPQ, and SMRG…SAML. A compositionally biased stretch (low complexity) spans 1298-1314; sequence QQQQQLRQQRQQQQQQL. Ser1315 and Ser1316 each carry phosphoserine. The segment covering 1328 to 1348 has biased composition (low complexity); the sequence is LHLQHQQQQQQQRRAGGQQQL. Residues 1455-1466 show a composition bias toward polar residues; sequence RNQQQQQHSLAQ. Composition is skewed to acidic residues over residues 1476–1489 and 1499–1512; these read DEDD…EETT and CDEE…DMED. Residues 1631 to 1654 show a composition bias toward low complexity; that stretch reads QQLQKLSPQSTTSSSSHTSHSNPH.

It belongs to the G-protein coupled receptor 2 family. LN-TM7 subfamily. Forms a heterodimer, consisting of a large extracellular region non-covalently linked to a seven-transmembrane moiety. Proteolytically cleaved into 2 subunits, an extracellular subunit and a seven-transmembrane subunit.

The protein localises to the cell membrane. The protein is Latrophilin Cirl of Drosophila persimilis (Fruit fly).